Consider the following 327-residue polypeptide: Olfactory receptor 51T1 (327 aa).

The Extracellular segment spans residues 1-27 (MAIFNNTTSSSSNFLLTAFPGLECAHV). 2 N-linked (GlcNAc...) asparagine glycosylation sites follow: Asn-5 and Asn-6. The chain crosses the membrane as a helical span at residues 28–48 (WISIPVCCLYTIALLGNSMIF). Residues 49–56 (LVIITKRR) lie on the Cytoplasmic side of the membrane. Residues 57–77 (LHKPMYYFLSMLAAVDLCLTI) traverse the membrane as a helical segment. Over 78–101 (TTLPTVLGVLWFHAREISFKACFI) the chain is Extracellular. Residues 102–122 (QMFFVHAFSLLESSVLVAMAF) form a helical membrane-spanning segment. At 123-141 (DRFVAICNPLNYATILTDR) the chain is on the cytoplasmic side. The helical transmembrane segment at 142-162 (MVLVIGLVICIRPAVFLLPLL) threads the bilayer. Topologically, residues 163-198 (VAINTVSFHGGHELSHPFCYHPEVIKYTYSKPWISS) are extracellular. Residues 199–219 (FWGLFLQLYLNGTDVLFILFS) traverse the membrane as a helical segment. Residues 220–239 (YVLILRTVLGIVARKKQQKA) lie on the Cytoplasmic side of the membrane. Residues 240 to 260 (LSTCVCHICAVTIFYVPLISL) traverse the membrane as a helical segment. Residues 261 to 275 (SLAHRLFHSTPRVLC) lie on the Extracellular side of the membrane. The helical transmembrane segment at 276–296 (STLANIYLLLPPVLNPIIYSL) threads the bilayer. Over 297–327 (KTKTIRQAMFQLLQSKGSWGFNVRGLRGRWD) the chain is Cytoplasmic.

This sequence belongs to the G-protein coupled receptor 1 family.

It is found in the cell membrane. Functionally, odorant receptor. The protein is Olfactory receptor 51T1 (OR51T1) of Homo sapiens (Human).